The primary structure comprises 1358 residues: DNA-directed RNA polymerase subunit beta (1358 aa).

The protein belongs to the RNA polymerase beta chain family. The RNAP catalytic core consists of 2 alpha, 1 beta, 1 beta' and 1 omega subunit. When a sigma factor is associated with the core the holoenzyme is formed, which can initiate transcription.

The enzyme catalyses RNA(n) + a ribonucleoside 5'-triphosphate = RNA(n+1) + diphosphate. Its function is as follows. DNA-dependent RNA polymerase catalyzes the transcription of DNA into RNA using the four ribonucleoside triphosphates as substrates. In Methylococcus capsulatus (strain ATCC 33009 / NCIMB 11132 / Bath), this protein is DNA-directed RNA polymerase subunit beta.